The following is a 115-amino-acid chain: MAKPEPDVVIPEGDSSKGAKLFKSKCAQCHTINKGGSVKQGPNLYGFYGRKSGASDYAYSDANKNSGIVWSDKHLFVYLVNPKQYIPGTKMVFAGLKKEQDRADLIAYLKEASSK.

C26, C29, H30, and M91 together coordinate heme c.

Belongs to the cytochrome c family. In terms of processing, binds 1 heme c group covalently per subunit.

Its subcellular location is the mitochondrion intermembrane space. Functionally, electron carrier protein. The oxidized form of the cytochrome c heme group can accept an electron from the heme group of the cytochrome c1 subunit of cytochrome reductase. Cytochrome c then transfers this electron to the cytochrome oxidase complex, the final protein carrier in the mitochondrial electron-transport chain. The protein is Cytochrome c of Theileria parva (East coast fever infection agent).